We begin with the raw amino-acid sequence, 200 residues long: Small ribosomal subunit protein uS4 (200 aa).

The segment at threonine 22–lysine 42 is disordered. The region spanning serine 92 to lysine 152 is the S4 RNA-binding domain.

Belongs to the universal ribosomal protein uS4 family. In terms of assembly, part of the 30S ribosomal subunit. Contacts protein S5. The interaction surface between S4 and S5 is involved in control of translational fidelity.

Functionally, one of the primary rRNA binding proteins, it binds directly to 16S rRNA where it nucleates assembly of the body of the 30S subunit. In terms of biological role, with S5 and S12 plays an important role in translational accuracy. This is Small ribosomal subunit protein uS4 from Bacillus licheniformis (strain ATCC 14580 / DSM 13 / JCM 2505 / CCUG 7422 / NBRC 12200 / NCIMB 9375 / NCTC 10341 / NRRL NRS-1264 / Gibson 46).